The following is a 131-amino-acid chain: D-ribose pyranase (131 aa).

His-20 serves as the catalytic Proton donor. Residues Asp-28, His-98, and 120–122 (YAN) contribute to the substrate site.

The protein belongs to the RbsD / FucU family. RbsD subfamily. As to quaternary structure, homodecamer.

The protein resides in the cytoplasm. The enzyme catalyses beta-D-ribopyranose = beta-D-ribofuranose. It functions in the pathway carbohydrate metabolism; D-ribose degradation; D-ribose 5-phosphate from beta-D-ribopyranose: step 1/2. In terms of biological role, catalyzes the interconversion of beta-pyran and beta-furan forms of D-ribose. This is D-ribose pyranase from Clostridium perfringens (strain SM101 / Type A).